We begin with the raw amino-acid sequence, 445 residues long: MITGKITCLHITDVRFPTSLDQHGSDAMHTDPDYSAAYVVIETDAADGLKGHGLTFTLGKGTEVVVCAVRALSRHVIGKALEDIVNNFRDFYRQLTSDGQLRWIGPEKGAVQLATAAVLNAVWDLWAKKEKKPLWKLLVDMDPHQLVSCIDFRYITDALTEEEALKILQNGKQGQRDREEHMLTSGYPAYTTSCAWLGYSDEQLKKLCSDALKEGWTRFKVKVGADLKDDIRRCELIRDMIGPDNIMMLDANQRWDVQEAISWVKDLAKYKPLWIEEPTSPDDILGHATISKELSPVNIGVATGEQCHNRVMFKQFLQAKALQYLQIDSCRLGSVNENLSVLLMAKKFNVPVCPHAGGVGLCELVQHLILFDYICVSGSLDNRMCEYVDHLHEHFTYPVIINRAAYMPPKDPGYSTEMKEESVLQYQFPDGAVWKKLILEKKVEV.

Residues 24–26, Tyr34, and Lys220 each bind substrate; that span reads GSD. The active-site Proton donor/acceptor is Lys222. Residue Asp250 coordinates Mg(2+). Residues Asn252, Glu276, Glu305, 355–357, and Glu386 contribute to the substrate site; that span reads HAG. Positions 276 and 305 each coordinate Mg(2+). His355 is an active-site residue.

This sequence belongs to the mandelate racemase/muconate lactonizing enzyme family. ENOSF1 subfamily. Mg(2+) is required as a cofactor.

The protein resides in the mitochondrion. The catalysed reaction is L-fuconate = 2-dehydro-3-deoxy-L-fuconate + H2O. Plays a role in the catabolism of L-fucose, a sugar that is part of the carbohydrates that are attached to cellular glycoproteins. Catalyzes the dehydration of L-fuconate to 2-keto-3-deoxy-L-fuconate by the abstraction of the 2-proton to generate an enediolate intermediate that is stabilized by the magnesium ion. May down-regulate thymidylate synthase activity, possibly already at the RNA level, by promoting the degradation of TYMS mRNA via an antisense RNA-based mechanism. The sequence is that of Mitochondrial enolase superfamily member 1 (enosf1) from Xenopus laevis (African clawed frog).